Reading from the N-terminus, the 375-residue chain is CCN family member 1 (375 aa).

The N-terminal stretch at 1-22 is a signal peptide; sequence MGSAGARPALAAALLCLARLAL. The region spanning 23 to 94 is the IGFBP N-terminal domain; sequence GSPCPAVCQC…AATNGICRAQ (72 aa). Intrachain disulfides connect cysteine 26-cysteine 50, cysteine 30-cysteine 52, cysteine 32-cysteine 53, cysteine 39-cysteine 56, cysteine 64-cysteine 78, and cysteine 70-cysteine 91. One can recognise a VWFC domain in the interval 98–164; it reads RPCEYNSKIY…GQCCEEWVCD (67 aa). Residues 223–268 enclose the TSP type-1 domain; that stretch reads KCIVQTTSWSQCSKTCGTGISTRVTNDNPDCKLIKETRICEVRPCG. The heparin-binding stretch occupies residues 274–310; it reads SLKKGKKCTKTKKSPSPVRFTYAGCSSVKKYRPKYCG. 5 cysteine pairs are disulfide-bonded: cysteine 281-cysteine 318, cysteine 298-cysteine 332, cysteine 309-cysteine 348, cysteine 312-cysteine 350, and cysteine 317-cysteine 354. The 75-residue stretch at 281–355 folds into the CTCK domain; the sequence is CTKTKKSPSP…QSCRCNYNCP (75 aa).

The protein belongs to the CCN family.

The protein resides in the secreted. Probable secreted regulatory protein. This is CCN family member 1 (CCN1) from Gallus gallus (Chicken).